Here is a 614-residue protein sequence, read N- to C-terminus: High-affinity choline transporter 1 (614 aa).

The chain crosses the membrane as a helical span at residues 6-26; the sequence is GVVSIVLFYLLILVVGIWAGR. Topologically, residues 27 to 44 are cytoplasmic; that stretch reads KKQSGNDSEEEVMLAGRS. Residues 45-65 form a helical membrane-spanning segment; sequence IGLFVGIFTMTATWVGGGYIN. The Extracellular segment spans residues 66–75; that stretch reads GTAEAIYTSG. A helical transmembrane segment spans residues 76-96; that stretch reads LVWCQAPFGYALSLVFGGIFF. Topologically, residues 97 to 119 are cytoplasmic; it reads ANPMRKQGYITMLDPLQDSFGER. Residues 120 to 140 traverse the membrane as a helical segment; the sequence is MGGLLFLPALCGEVFWAAGIL. At 141–158 the chain is on the extracellular side; that stretch reads AALGATLSVIIDMDHRTS. Residues 159–179 form a helical membrane-spanning segment; the sequence is VILSSCIAIFYTLFGGLYSVA. The Cytoplasmic segment spans residues 180–185; that stretch reads YTDVIQ. The helical transmembrane segment at 186-206 threads the bilayer; the sequence is LFCIFIGLWMCIPFAWSNEHV. The Extracellular portion of the chain corresponds to 207–225; sequence GSLSDLEVDWIGHVEPKKH. The helical transmembrane segment at 226-246 threads the bilayer; that stretch reads WLYIDYGLLLVFGGIPWQVYF. The Cytoplasmic portion of the chain corresponds to 247 to 262; sequence QRVLSSKTAGRAQLLS. A helical membrane pass occupies residues 263–283; sequence YVAAAGCILMAIPPVLIGAIA. At 284–305 the chain is on the extracellular side; that stretch reads KATPWNETDYKGPYPLTVDETS. Asparagine 289 is a glycosylation site (N-linked (GlcNAc...) asparagine). Residues 306–326 form a helical membrane-spanning segment; sequence MILPMVLQYLTPDFVSFFGLG. Residues 327–364 are Cytoplasmic-facing; it reads AVSAAVMSSADSSVLSAASMFARNVYKLIFRQKASEME. Residues 365-385 traverse the membrane as a helical segment; sequence IIWVMRVAIIVVGILATIMAL. Residues 386-394 lie on the Extracellular side of the membrane; sequence TIPSIYGLW. Residues 395–415 form a helical membrane-spanning segment; the sequence is SMCSDLVYVILFPQLLMVVHF. Residues 416–424 are Cytoplasmic-facing; the sequence is KKHCNTYGS. Residues 425-445 traverse the membrane as a helical segment; that stretch reads LSAYIVALAIRLSGGEAILGL. The Extracellular segment spans residues 446–467; it reads APLIKYPGYDEETKEQMFPFRT. Residues 468–488 form a helical membrane-spanning segment; sequence MAMLLSLVTLISVSWWTKMMF. Over 489–614 the chain is Cytoplasmic; sequence ESGKLPPSYD…PTAEQDNTAF (126 aa). A disordered region spans residues 583–614; that stretch reads ATGVKPSGGGGGHLQSQSGMAMPTAEQDNTAF.

This sequence belongs to the sodium:solute symporter (SSF) (TC 2.A.21) family.

Its subcellular location is the membrane. In terms of biological role, imports choline from the extracellular space to the neuron with high affinity. Rate-limiting step in acetylcholine synthesis. Sodium ion and chloride ion dependent. The protein is High-affinity choline transporter 1 of Drosophila melanogaster (Fruit fly).